Consider the following 122-residue polypeptide: Small ribosomal subunit protein uS13 (122 aa).

The tract at residues 99–122 (RGQRTHTNARTRKGPAKAIAGKKK) is disordered.

It belongs to the universal ribosomal protein uS13 family. Part of the 30S ribosomal subunit. Forms a loose heterodimer with protein S19. Forms two bridges to the 50S subunit in the 70S ribosome.

Located at the top of the head of the 30S subunit, it contacts several helices of the 16S rRNA. In the 70S ribosome it contacts the 23S rRNA (bridge B1a) and protein L5 of the 50S subunit (bridge B1b), connecting the 2 subunits; these bridges are implicated in subunit movement. Contacts the tRNAs in the A and P-sites. This is Small ribosomal subunit protein uS13 from Bradyrhizobium sp. (strain ORS 278).